The sequence spans 354 residues: Alternative oxidase, mitochondrial (354 aa).

A mitochondrion-targeting transit peptide spans 1 to 64 (MNSMSTTGPI…RFISSTPQSQ (64 aa)). Residues 153-173 (FVFLESVAGVPGMVGGMLRHL) form a helical membrane-spanning segment. The Fe cation site is built by glutamate 157, glutamate 196, and histidine 199. Residues 215 to 235 (LMVLGAQGVFFNGFFLSYLIS) form a helical membrane-spanning segment. Fe cation is bound by residues glutamate 247, glutamate 302, and histidine 305. The interval 333–354 (KPHPGKGIKHLKTTGWEREEVV) is disordered. Residues 335–344 (HPGKGIKHLK) show a composition bias toward basic residues.

The protein belongs to the alternative oxidase family. Requires Fe cation as cofactor.

The protein localises to the mitochondrion inner membrane. Catalyzes cyanide-resistant oxygen consumption. May increase respiration when the cytochrome respiratory pathway is restricted, or in response to low temperatures. The chain is Alternative oxidase, mitochondrial (alxA) from Emericella nidulans (strain FGSC A4 / ATCC 38163 / CBS 112.46 / NRRL 194 / M139) (Aspergillus nidulans).